A 264-amino-acid polypeptide reads, in one-letter code: [LysW]-aminoadipate/[LysW]-glutamate kinase (264 aa).

Substrate contacts are provided by residues 35–36 (GG), R62, and N167.

It belongs to the acetylglutamate kinase family. LysZ subfamily.

The protein localises to the cytoplasm. The catalysed reaction is [amino-group carrier protein]-C-terminal-N-(1,4-dicarboxybutan-1-yl)-L-glutamine + ATP = [amino-group carrier protein]-C-terminal-N-(1-carboxy-5-phosphooxy-5-oxopentan-1-yl)-L-glutamine + ADP. It carries out the reaction [amino-group carrier protein]-C-terminal-gamma-(L-glutamyl)-L-glutamate + ATP = [amino-group carrier protein]-C-terminal-gamma-(5-phospho-L-glutamyl)-L-glutamate + ADP. It functions in the pathway amino-acid biosynthesis; L-lysine biosynthesis via AAA pathway; L-lysine from L-alpha-aminoadipate (Thermus route): step 2/5. The protein operates within amino-acid biosynthesis; L-arginine biosynthesis. Its function is as follows. Involved in both the arginine and lysine biosynthetic pathways. Phosphorylates the LysW-bound precursors glutamate (for arginine biosynthesis), respectively alpha-aminoadipate (for lysine biosynthesis). This chain is [LysW]-aminoadipate/[LysW]-glutamate kinase, found in Saccharolobus solfataricus (strain ATCC 35092 / DSM 1617 / JCM 11322 / P2) (Sulfolobus solfataricus).